The primary structure comprises 153 residues: ATP synthase subunit b' (153 aa).

Residues 23–40 (LMAIQVVALTYILNSLFF) traverse the membrane as a helical segment.

Belongs to the ATPase B chain family. In terms of assembly, F-type ATPases have 2 components, F(1) - the catalytic core - and F(0) - the membrane proton channel. F(1) has five subunits: alpha(3), beta(3), gamma(1), delta(1), epsilon(1). F(0) has four main subunits: a(1), b(1), b'(1) and c(10-14). The alpha and beta chains form an alternating ring which encloses part of the gamma chain. F(1) is attached to F(0) by a central stalk formed by the gamma and epsilon chains, while a peripheral stalk is formed by the delta, b and b' chains.

It localises to the cellular thylakoid membrane. F(1)F(0) ATP synthase produces ATP from ADP in the presence of a proton or sodium gradient. F-type ATPases consist of two structural domains, F(1) containing the extramembraneous catalytic core and F(0) containing the membrane proton channel, linked together by a central stalk and a peripheral stalk. During catalysis, ATP synthesis in the catalytic domain of F(1) is coupled via a rotary mechanism of the central stalk subunits to proton translocation. In terms of biological role, component of the F(0) channel, it forms part of the peripheral stalk, linking F(1) to F(0). The b'-subunit is a diverged and duplicated form of b found in plants and photosynthetic bacteria. The polypeptide is ATP synthase subunit b' (Prochlorococcus marinus (strain MIT 9215)).